A 409-amino-acid chain; its full sequence is Translation initiation factor 2 subunit gamma (409 aa).

One can recognise a tr-type G domain in the interval 6 to 203 (QPEVNIGLVG…AVQSEIPTPE (198 aa)). A G1 region spans residues 15–22 (GHVDHGKT). Residues D18, T22, G43, and S45 each coordinate Mg(2+). 18-23 (DHGKTT) is a binding site for GTP. The G2 stretch occupies residues 43 to 47 (GISIR). The segment at 90 to 93 (DAPG) is G3. GTP contacts are provided by residues 146 to 149 (NKVD) and 181 to 183 (SAG). Residues 146-149 (NKVD) form a G4 region. A G5 region spans residues 181–183 (SAG).

Belongs to the TRAFAC class translation factor GTPase superfamily. Classic translation factor GTPase family. EIF2G subfamily. Heterotrimer composed of an alpha, a beta and a gamma chain. It depends on Mg(2+) as a cofactor.

It catalyses the reaction GTP + H2O = GDP + phosphate + H(+). EIF-2 functions in the early steps of protein synthesis by forming a ternary complex with GTP and initiator tRNA. The chain is Translation initiation factor 2 subunit gamma from Haloarcula marismortui (strain ATCC 43049 / DSM 3752 / JCM 8966 / VKM B-1809) (Halobacterium marismortui).